Consider the following 107-residue polypeptide: ATP synthase subunit c (107 aa).

Helical transmembrane passes span I4–Q24, F29–M49, and M74–I94.

Belongs to the ATPase C chain family. In terms of assembly, F-type ATPases have 2 components, F(1) - the catalytic core - and F(0) - the membrane proton channel. F(1) has five subunits: alpha(3), beta(3), gamma(1), delta(1), epsilon(1). F(0) has three main subunits: a(1), b(2) and c(10-14). The alpha and beta chains form an alternating ring which encloses part of the gamma chain. F(1) is attached to F(0) by a central stalk formed by the gamma and epsilon chains, while a peripheral stalk is formed by the delta and b chains.

The protein localises to the cell inner membrane. In terms of biological role, f(1)F(0) ATP synthase produces ATP from ADP in the presence of a proton or sodium gradient. F-type ATPases consist of two structural domains, F(1) containing the extramembraneous catalytic core and F(0) containing the membrane proton channel, linked together by a central stalk and a peripheral stalk. During catalysis, ATP synthesis in the catalytic domain of F(1) is coupled via a rotary mechanism of the central stalk subunits to proton translocation. Key component of the F(0) channel; it plays a direct role in translocation across the membrane. A homomeric c-ring of between 10-14 subunits forms the central stalk rotor element with the F(1) delta and epsilon subunits. This chain is ATP synthase subunit c, found in Campylobacter lari (strain RM2100 / D67 / ATCC BAA-1060).